The following is a 159-amino-acid chain: Transcriptional repressor NrdR (159 aa).

A zinc finger lies at 3-34 (CPFCRHEDTQVVDSRVSEDGAAIRRRRRCSAC). The ATP-cone domain occupies 49 to 139 (PAVVKKDGSR…VYRRFEDVSE (91 aa)).

Belongs to the NrdR family. Zn(2+) serves as cofactor.

In terms of biological role, negatively regulates transcription of bacterial ribonucleotide reductase nrd genes and operons by binding to NrdR-boxes. In Burkholderia multivorans (strain ATCC 17616 / 249), this protein is Transcriptional repressor NrdR.